A 437-amino-acid chain; its full sequence is CCA-adding enzyme (437 aa).

ATP contacts are provided by serine 50 and lysine 53. Residues serine 50 and lysine 53 each coordinate CTP. Positions 61, 63, and 112 each coordinate Mg(2+). ATP-binding residues include histidine 135, lysine 155, and tyrosine 164. 3 residues coordinate CTP: histidine 135, lysine 155, and tyrosine 164.

This sequence belongs to the tRNA nucleotidyltransferase/poly(A) polymerase family. Archaeal CCA-adding enzyme subfamily. As to quaternary structure, homodimer. The cofactor is Mg(2+).

The enzyme catalyses a tRNA precursor + 2 CTP + ATP = a tRNA with a 3' CCA end + 3 diphosphate. It carries out the reaction a tRNA with a 3' CCA end + 2 CTP + ATP = a tRNA with a 3' CCACCA end + 3 diphosphate. In terms of biological role, catalyzes the addition and repair of the essential 3'-terminal CCA sequence in tRNAs without using a nucleic acid template. Adds these three nucleotides in the order of C, C, and A to the tRNA nucleotide-73, using CTP and ATP as substrates and producing inorganic pyrophosphate. tRNA 3'-terminal CCA addition is required both for tRNA processing and repair. Also involved in tRNA surveillance by mediating tandem CCA addition to generate a CCACCA at the 3' terminus of unstable tRNAs. While stable tRNAs receive only 3'-terminal CCA, unstable tRNAs are marked with CCACCA and rapidly degraded. The polypeptide is CCA-adding enzyme (Thermoplasma volcanium (strain ATCC 51530 / DSM 4299 / JCM 9571 / NBRC 15438 / GSS1)).